We begin with the raw amino-acid sequence, 82 residues long: Sec-independent protein translocase protein TatA (82 aa).

The helical transmembrane segment at 1 to 21 (MGLSTTHLIIFLVIIVLIFGT) threads the bilayer.

This sequence belongs to the TatA/E family. The Tat system comprises two distinct complexes: a TatABC complex, containing multiple copies of TatA, TatB and TatC subunits, and a separate TatA complex, containing only TatA subunits. Substrates initially bind to the TatABC complex, which probably triggers association of the separate TatA complex to form the active translocon.

It is found in the cell inner membrane. Part of the twin-arginine translocation (Tat) system that transports large folded proteins containing a characteristic twin-arginine motif in their signal peptide across membranes. TatA could form the protein-conducting channel of the Tat system. This is Sec-independent protein translocase protein TatA from Leptothrix cholodnii (strain ATCC 51168 / LMG 8142 / SP-6) (Leptothrix discophora (strain SP-6)).